A 151-amino-acid polypeptide reads, in one-letter code: Large ribosomal subunit protein bL9 (151 aa).

The protein belongs to the bacterial ribosomal protein bL9 family.

In terms of biological role, binds to the 23S rRNA. The protein is Large ribosomal subunit protein bL9 of Bordetella pertussis (strain Tohama I / ATCC BAA-589 / NCTC 13251).